Reading from the N-terminus, the 633-residue chain is Protein BZZ1 (633 aa).

Residues 5 to 271 (LSIGNEIKDS…VVKQNKPSLN (267 aa)) enclose the F-BAR domain. Positions 138 to 210 (DMVNKKDNIY…INQANRTKDK (73 aa)) form a coiled coil. 4 positions are modified to phosphoserine: S327, S463, S472, and S476. The disordered stretch occupies residues 429-495 (VDSKPSSGGS…KKTTQNSSDD (67 aa)). Low complexity predominate over residues 474-493 (NNSIRTTSTNNTKKTTQNSS). 2 consecutive SH3 domains span residues 493–555 (SDDG…ISSA) and 577–633 (LPVR…SYCK).

The protein belongs to the BZZ1 family. Interacts with LAS17 and MYO5.

It is found in the cytoplasm. It localises to the cytoskeleton. Its subcellular location is the actin patch. Its function is as follows. Plays a role in endocytosis and trafficking to the vacuole. Functions with type I myosins to restore polarity of the actin cytoskeleton after NaCl stress. The polypeptide is Protein BZZ1 (BZZ1) (Saccharomyces cerevisiae (strain ATCC 204508 / S288c) (Baker's yeast)).